Reading from the N-terminus, the 189-residue chain is Phosphoheptose isomerase (189 aa).

Residues 34–189 (LADSLAGGRK…CDLVEKRLFP (156 aa)) form the SIS domain. 49–51 (NGG) provides a ligand contact to substrate. Positions 58 and 62 each coordinate Zn(2+). Substrate contacts are provided by residues Glu62, 91 to 92 (ND), 117 to 119 (STS), Ser122, and Gln169. Zn(2+) contacts are provided by Gln169 and His177.

Belongs to the SIS family. GmhA subfamily. As to quaternary structure, homotetramer. Requires Zn(2+) as cofactor.

Its subcellular location is the cytoplasm. It catalyses the reaction 2 D-sedoheptulose 7-phosphate = D-glycero-alpha-D-manno-heptose 7-phosphate + D-glycero-beta-D-manno-heptose 7-phosphate. Its pathway is carbohydrate biosynthesis; D-glycero-D-manno-heptose 7-phosphate biosynthesis; D-glycero-alpha-D-manno-heptose 7-phosphate and D-glycero-beta-D-manno-heptose 7-phosphate from sedoheptulose 7-phosphate: step 1/1. Its function is as follows. Catalyzes the isomerization of sedoheptulose 7-phosphate in D-glycero-D-manno-heptose 7-phosphate. The protein is Phosphoheptose isomerase of Geobacter sulfurreducens (strain ATCC 51573 / DSM 12127 / PCA).